The primary structure comprises 36 residues: Photosystem I reaction center subunit VIII (36 aa).

A helical membrane pass occupies residues 10 to 29; that stretch reads FVPLVGLVFPAIAMASLFLY.

Belongs to the PsaI family.

It localises to the plastid. It is found in the chloroplast thylakoid membrane. Its function is as follows. May help in the organization of the PsaL subunit. This Oryza nivara (Indian wild rice) protein is Photosystem I reaction center subunit VIII.